Consider the following 253-residue polypeptide: CD151 antigen (253 aa).

Residues 1–18 are Cytoplasmic-facing; sequence MGEFNEKKTTCGTVCLKY. 2 S-palmitoyl cysteine lipidation sites follow: C11 and C15. A helical membrane pass occupies residues 19–39; that stretch reads LLFTYNCCFWLAGLAVMAVGI. Over 40-57 the chain is Extracellular; sequence WTLALKSDYISLLASGTY. Residues 58-78 traverse the membrane as a helical segment; it reads LATAYILVVAGTVVMVTGVLG. The Cytoplasmic portion of the chain corresponds to 79–91; the sequence is CCATFKERRNLLR. The chain crosses the membrane as a helical span at residues 92–112; sequence LYFILLLIIFLLEIIAGILAY. The Extracellular segment spans residues 113–221; sequence AYYQQLNTEL…LETFIQEHLR (109 aa). Residue N159 is glycosylated (N-linked (GlcNAc...) asparagine). The helical transmembrane segment at 222–242 threads the bilayer; sequence VIGAVGIGIACVQVFGMIFTC. S-palmitoyl cysteine attachment occurs at residues C242 and C243. The Cytoplasmic portion of the chain corresponds to 243–253; that stretch reads CLYRSLKLEHY.

This sequence belongs to the tetraspanin (TM4SF) family. As to quaternary structure, interacts with integrins ITGA3:ITGB1, ITGA5:ITGB1, ITGA3:ITGB1 and ITGA6:ITGB4 and with CD9 and CD181. Interacts (via the second extracellular domain) with integrin ITGAV:ITGB3. Interacts with ITGA3; this interaction modulates ITGA3 glycosylation pattern. Interacts with F11R. Interacts with RAC1 and CDC42; these interactions mediate physical association of RAC1 and CDC42 with integrin adhesion receptor complexes. In terms of processing, palmitoylated. Palmitoylation by ZDHHC2 regulates CD151 expression, association with other tetraspanin family proteins and function in cell adhesion. Post-translationally, ubiquitinated by RNF128 on lysine residues present in the tetraspanin amino terminus via 'Lys-48'-linked ubiquitin leading to proteasomal degradation. In terms of tissue distribution, expressed in a variety of tissues including vascular endothelium and epidermis. Expressed on erythroid cells, with a higher level of expression in erythroid precursors than on mature erythrocytes. Acts as a sensitive T-cell activation marker.

The protein resides in the cell membrane. Its function is as follows. Structural component of specialized membrane microdomains known as tetraspanin-enriched microdomains (TERMs), which act as platforms for receptor clustering and signaling. Plays a role in various cellular and molecular mechanism through its association with both integrin and non-integrin proteins. These interactions facilitate critical cellular functions, including cell-to-cell communication, wound healing, platelet aggregation, trafficking, cell motility, and angiogenesis. Via interaction with JAM-A/F11R and integrin ITGA3:ITGB1, promotes the recruitment of signaling molecules such as RAC1, CDC42 and RhoGTPases to facilitate the polarization of epithelial cells and the reorganization of the actin cytoskeleton, which are critical steps in cell migration process. Regulates the glycosylation pattern of ITGA3:ITGB1 thereby modulating its activity. Plays an essential role in the maintenance of central laminin-binding integrin ITGA6:ITGB4-containing adhesion complexes. Essential for the proper assembly of the glomerular and tubular basement membranes in kidney. Contributes to T-cell activation by modulating integrin signaling leading to activation of downstream targets PTK2 and MAPK1/MAPK3. In terms of biological role, (Microbial infection) Plays a role in human papillomavirus 16/HPV-16 endocytosis upon binding to cell surface receptor. Functionally, (Microbial infection) Plays a role in human cytomegalovirus entry into host cell by contributing to entry receptor binding, membrane fusion, or release of the capsid. This is CD151 antigen (CD151) from Homo sapiens (Human).